The following is a 120-amino-acid chain: Prefoldin subunit beta (120 aa).

It belongs to the prefoldin subunit beta family. As to quaternary structure, heterohexamer of two alpha and four beta subunits.

The protein resides in the cytoplasm. Its function is as follows. Molecular chaperone capable of stabilizing a range of proteins. Seems to fulfill an ATP-independent, HSP70-like function in archaeal de novo protein folding. This is Prefoldin subunit beta (pfdB) from Methanopyrus kandleri (strain AV19 / DSM 6324 / JCM 9639 / NBRC 100938).